The chain runs to 117 residues: Ig lambda-1 chain V region (117 aa).

The first 20 residues, 1 to 20 (MAWISLILSLLALSSGGAIS), serve as a signal peptide directing secretion. At Gln21 the chain carries Pyrrolidone carboxylic acid. An Ig-like domain is found at 21–117 (QAVVTQESAL…YFCALWYSNH (97 aa)).

The chain is Ig lambda-1 chain V region from Mus musculus (Mouse).